A 907-amino-acid chain; its full sequence is Interference hedgehog (907 aa).

The signal sequence occupies residues 1–23; it reads MSLTRRFSLTLLLLLPLLTSLLA. The Extracellular segment spans residues 24–709; the sequence is AIPVLQANLS…SHNETFNMNP (686 aa). Ig-like C2-type domains are found at residues 42–149, 152–233, 252–340, and 346–433; these read PGVR…ASIS, GADT…VRLA, PALL…FIEL, and PRIL…LQVN. 3 disulfide bridges follow: Cys-65/Cys-127, Cys-173/Cys-221, and Cys-276/Cys-324. Asn-101, Asn-203, Asn-300, and Asn-355 each carry an N-linked (GlcNAc...) asparagine glycan. Cysteines 367 and 415 form a disulfide. The interval 427 to 474 is disordered; the sequence is GTLLQVNPKQLPDGEGTGMDSGRSSARPTHSRKQKQQTQMVPPSAPNV. The span at 462–474 shows a compositional bias: polar residues; it reads QQTQMVPPSAPNV. 2 consecutive Fibronectin type-III domains span residues 468-578 and 586-681; these read PPSA…LQRG and VPEL…TQRP. N-linked (GlcNAc...) asparagine glycosylation occurs at Asn-473. Heparin contacts are provided by Arg-504, Lys-511, and Lys-513. N-linked (GlcNAc...) asparagine glycans are attached at residues Asn-537 and Asn-548. Arg-552 provides a ligand contact to heparin. An N-linked (GlcNAc...) asparagine glycan is attached at Asn-568. Over residues 676–688 the composition is skewed to polar residues; that stretch reads GRTQRPRASSTPQ. Positions 676 to 701 are disordered; that stretch reads GRTQRPRASSTPQPVLHAVDTTTPSH. A glycan (N-linked (GlcNAc...) asparagine) is linked at Asn-702. A helical membrane pass occupies residues 710-730; it reads MLTGTIGGGALLVLLVISACL. The Cytoplasmic segment spans residues 731–907; sequence CLCRRRSSRG…SSGSLNSVGV (177 aa). Disordered regions lie at residues 780–805 and 829–881; these read AQQQ…QDND and MSSS…NKPG. Low complexity-rich tracts occupy residues 781–794 and 853–863; these read QQQQ…LQQQ and NNNNLNQPGDG. Positions 865–878 are enriched in polar residues; that stretch reads LANSADSPRLQASN.

The protein belongs to the immunoglobulin superfamily. IHOG family. Homodimer. Heterotetramer; 2 iHog chains bind 2 hh chains when facilitated by heparin, heparin is required to promote high-affinity interactions between hh and iHog.

It is found in the membrane. Its function is as follows. Mediates response to the active Hedgehog (Hh) protein signal in embryos, functioning upstream or at the level of patched (ptc). The polypeptide is Interference hedgehog (Drosophila virilis (Fruit fly)).